The following is a 485-amino-acid chain: UDP-N-acetylmuramoyl-L-alanyl-D-glutamate--2,6-diaminopimelate ligase (485 aa).

Ser-28 serves as a coordination point for UDP-N-acetyl-alpha-D-muramoyl-L-alanyl-D-glutamate. An ATP-binding site is contributed by 108 to 114 (GTNGKTS). UDP-N-acetyl-alpha-D-muramoyl-L-alanyl-D-glutamate-binding positions include Asn-147, 148–149 (TT), Ser-175, and Arg-183. Lys-215 is subject to N6-carboxylysine. Meso-2,6-diaminopimelate-binding positions include Arg-374, 398–401 (DNPR), Gly-449, and Glu-453. The Meso-diaminopimelate recognition motif motif lies at 398-401 (DNPR).

The protein belongs to the MurCDEF family. MurE subfamily. Mg(2+) is required as a cofactor. In terms of processing, carboxylation is probably crucial for Mg(2+) binding and, consequently, for the gamma-phosphate positioning of ATP.

The protein resides in the cytoplasm. It carries out the reaction UDP-N-acetyl-alpha-D-muramoyl-L-alanyl-D-glutamate + meso-2,6-diaminopimelate + ATP = UDP-N-acetyl-alpha-D-muramoyl-L-alanyl-gamma-D-glutamyl-meso-2,6-diaminopimelate + ADP + phosphate + H(+). The protein operates within cell wall biogenesis; peptidoglycan biosynthesis. Its function is as follows. Catalyzes the addition of meso-diaminopimelic acid to the nucleotide precursor UDP-N-acetylmuramoyl-L-alanyl-D-glutamate (UMAG) in the biosynthesis of bacterial cell-wall peptidoglycan. This is UDP-N-acetylmuramoyl-L-alanyl-D-glutamate--2,6-diaminopimelate ligase from Fusobacterium nucleatum subsp. nucleatum (strain ATCC 25586 / DSM 15643 / BCRC 10681 / CIP 101130 / JCM 8532 / KCTC 2640 / LMG 13131 / VPI 4355).